A 199-amino-acid chain; its full sequence is UPF0056 membrane protein bbp_399 (199 aa).

A run of 6 helical transmembrane segments spans residues 7 to 29 (VTIL…SILK), 39 to 58 (ILIR…LFAG), 71 to 93 (TVSV…PTYE), 108 to 130 (FLVP…MLLS), 137 to 156 (ILYL…VILL), and 176 to 198 (LMGL…SWFY).

It belongs to the UPF0056 (MarC) family.

The protein resides in the cell membrane. This chain is UPF0056 membrane protein bbp_399, found in Buchnera aphidicola subsp. Baizongia pistaciae (strain Bp).